The primary structure comprises 419 residues: Synaptotagmin-2 (419 aa).

Residues 1 to 62 (MRNIFKRNQE…NEINKIPLPP (62 aa)) lie on the Vesicular side of the membrane. The tract at residues 16 to 39 (ATTTATMPIGPVDNSTESGGAGES) is disordered. N-linked (GlcNAc...) asparagine glycosylation occurs at asparagine 29. Residues 63 to 83 (WALIAIAVVAGLLLLTCCFCI) form a helical membrane-spanning segment. Residues 84-419 (CKKCCCKKKK…EVDALLGKNK (336 aa)) are Cytoplasmic-facing. The segment at 99–138 (GKGMKNAMNMKDMKGGQDDDDAETGLTEGEGEGEEEKEPE) is disordered. Over residues 116 to 136 (DDDDAETGLTEGEGEGEEEKE) the composition is skewed to acidic residues. Threonine 122 and threonine 125 each carry phosphothreonine. Positions 133-379 (EEKEPENLGK…AIGKIFVGSN (247 aa)) are phospholipid binding. 2 C2 domains span residues 139 to 258 (NLGK…EEWR) and 270 to 403 (KLGD…AQWH). Positions 169, 170, and 176 each coordinate Ca(2+). The residue at position 199 (threonine 199) is a Phosphothreonine. Tyrosine 227 carries the post-translational modification Phosphotyrosine. Aspartate 228, phenylalanine 229, aspartate 230, serine 233, lysine 234, aspartate 236, aspartate 301, aspartate 307, aspartate 361, and aspartate 363 together coordinate Ca(2+). Position 383 is a phosphothreonine (threonine 383).

Belongs to the synaptotagmin family. In terms of assembly, homotetramer. Heterodimer; heterodimerizes with SYT1 in presence of calcium. Interacts with STON2. Interacts with SCAMP5. Interacts with PRRT2. Ca(2+) serves as cofactor. Post-translationally, phosphorylation at Thr-199 by WNK1, changes the calcium requirement for SYT2-binding to phospholipid membranes. In terms of tissue distribution, expressed at the neuromuscular junction. Expressed in melanocytes.

It localises to the cytoplasmic vesicle. Its subcellular location is the secretory vesicle. The protein localises to the synaptic vesicle membrane. The protein resides in the chromaffin granule membrane. It is found in the cytoplasm. Functionally, exhibits calcium-dependent phospholipid and inositol polyphosphate binding properties. May have a regulatory role in the membrane interactions during trafficking of synaptic vesicles at the active zone of the synapse. Plays a role in dendrite formation by melanocytes. The protein is Synaptotagmin-2 of Homo sapiens (Human).